The following is a 406-amino-acid chain: Subtilisin-like protease CPC735_023170 (406 aa).

Residues 1 to 20 (MRLFQSTCVLVGTVLPLFTA) form the signal peptide. The propeptide occupies 21 to 118 (FPISSPREIE…VEPDSMAYVT (98 aa)). The Inhibitor I9 domain occupies 35–115 (KYIITFKKGI…VESVEPDSMA (81 aa)). Asn-125 carries N-linked (GlcNAc...) asparagine glycosylation. Residues 127 to 406 (TYGPRRISHR…NKLAYNGSGK (280 aa)) enclose the Peptidase S8 domain. Active-site charge relay system residues include Asp-161 and His-192. A glycan (N-linked (GlcNAc...) asparagine) is linked at Asn-239. The tract at residues 283 to 309 (NDGRDAGRNSPGSAPESITVGSINSRR) is disordered. Asn-346 carries an N-linked (GlcNAc...) asparagine glycan. Ser-351 (charge relay system) is an active-site residue. Residue Asn-402 is glycosylated (N-linked (GlcNAc...) asparagine).

Belongs to the peptidase S8 family.

Its subcellular location is the secreted. Functionally, secreted subtilisin-like serine protease with keratinolytic activity that contributes to pathogenicity. The polypeptide is Subtilisin-like protease CPC735_023170 (Coccidioides posadasii (strain C735) (Valley fever fungus)).